Here is a 214-residue protein sequence, read N- to C-terminus: Alkaline phosphatase-like protein (214 aa).

A run of 3 helical transmembrane segments spans residues 48–68 (LGII…ALIL), 141–161 (FLIL…CLGA), and 177–197 (YSSV…LIFV).

It belongs to the DedA family.

It localises to the cell membrane. The chain is Alkaline phosphatase-like protein (apl) from Lactococcus lactis subsp. lactis (strain IL1403) (Streptococcus lactis).